The following is a 37-amino-acid chain: Large ribosomal subunit protein bL36c (37 aa).

The protein belongs to the bacterial ribosomal protein bL36 family.

The protein resides in the plastid. The protein localises to the cyanelle. In Cyanophora paradoxa, this protein is Large ribosomal subunit protein bL36c (rpl36).